Here is a 293-residue protein sequence, read N- to C-terminus: Energy-coupling factor transporter ATP-binding protein EcfA2 (293 aa).

Positions 3–246 constitute an ABC transporter domain; the sequence is ITFQKVEHRY…ADELEKIGVD (244 aa). 40–47 contributes to the ATP binding site; the sequence is GHTGSGKS.

It belongs to the ABC transporter superfamily. Energy-coupling factor EcfA family. As to quaternary structure, forms a stable energy-coupling factor (ECF) transporter complex composed of 2 membrane-embedded substrate-binding proteins (S component), 2 ATP-binding proteins (A component) and 2 transmembrane proteins (T component).

It is found in the cell membrane. In terms of biological role, ATP-binding (A) component of a common energy-coupling factor (ECF) ABC-transporter complex. Unlike classic ABC transporters this ECF transporter provides the energy necessary to transport a number of different substrates. The protein is Energy-coupling factor transporter ATP-binding protein EcfA2 of Bacillus cereus (strain ZK / E33L).